Consider the following 203-residue polypeptide: Outer-membrane lipoprotein carrier protein (203 aa).

Positions M1–A21 are cleaved as a signal peptide.

The protein belongs to the LolA family. Monomer.

It is found in the periplasm. In terms of biological role, participates in the translocation of lipoproteins from the inner membrane to the outer membrane. Only forms a complex with a lipoprotein if the residue after the N-terminal Cys is not an aspartate (The Asp acts as a targeting signal to indicate that the lipoprotein should stay in the inner membrane). This Pectobacterium atrosepticum (strain SCRI 1043 / ATCC BAA-672) (Erwinia carotovora subsp. atroseptica) protein is Outer-membrane lipoprotein carrier protein.